The following is a 258-amino-acid chain: 3-deoxy-manno-octulosonate cytidylyltransferase (258 aa).

Belongs to the KdsB family.

Its subcellular location is the cytoplasm. The enzyme catalyses 3-deoxy-alpha-D-manno-oct-2-ulosonate + CTP = CMP-3-deoxy-beta-D-manno-octulosonate + diphosphate. Its pathway is nucleotide-sugar biosynthesis; CMP-3-deoxy-D-manno-octulosonate biosynthesis; CMP-3-deoxy-D-manno-octulosonate from 3-deoxy-D-manno-octulosonate and CTP: step 1/1. It functions in the pathway bacterial outer membrane biogenesis; lipopolysaccharide biosynthesis. Activates KDO (a required 8-carbon sugar) for incorporation into bacterial lipopolysaccharide in Gram-negative bacteria. This Parvibaculum lavamentivorans (strain DS-1 / DSM 13023 / NCIMB 13966) protein is 3-deoxy-manno-octulosonate cytidylyltransferase.